Consider the following 582-residue polypeptide: Threonine--tRNA ligase (582 aa).

A catalytic region spans residues 185 to 478; the sequence is DHRKLGKELE…LTEQYGGAFP (294 aa). Residues cysteine 278, histidine 329, and histidine 455 each contribute to the Zn(2+) site.

This sequence belongs to the class-II aminoacyl-tRNA synthetase family. Homodimer. It depends on Zn(2+) as a cofactor.

Its subcellular location is the cytoplasm. The catalysed reaction is tRNA(Thr) + L-threonine + ATP = L-threonyl-tRNA(Thr) + AMP + diphosphate + H(+). Catalyzes the attachment of threonine to tRNA(Thr) in a two-step reaction: L-threonine is first activated by ATP to form Thr-AMP and then transferred to the acceptor end of tRNA(Thr). Also edits incorrectly charged L-seryl-tRNA(Thr). This chain is Threonine--tRNA ligase, found in Dehalococcoides mccartyi (strain ATCC BAA-2100 / JCM 16839 / KCTC 5957 / BAV1).